Consider the following 267-residue polypeptide: MNALLTNPFKERLRKGEVQIGLWLSSTTAYMAEIAATSGYDWLLIDGEHAPNTIQDLYHQLQAVAPYASQPVIRPVEGSKPLIKQVLDIGAQTLLIPMVDTADQARQVVSATRYPPYGERGVGASVARAARWGRIENYMAQVNDSLCLLVQVESKTALDNLDEILDVEGIDGVFIGPADLSASLGYPDNAGHPEVQRIIETSIRRIRAAGKAAGFLAVAPDMAQQCLAWGANFVAVGVDTMLYSDALDQRLAMFKSGKNGPRIKGSY.

Residue H49 is the Proton acceptor of the active site. Q151 lines the substrate pocket. E153 contacts Mg(2+). A178 and D179 together coordinate substrate. D179 provides a ligand contact to Mg(2+).

The protein belongs to the HpcH/HpaI aldolase family. KDR aldolase subfamily. In terms of assembly, homohexamer. It depends on Mg(2+) as a cofactor.

It carries out the reaction 2-dehydro-3-deoxy-L-rhamnonate = (S)-lactaldehyde + pyruvate. Functionally, catalyzes the reversible retro-aldol cleavage of 2-keto-3-deoxy-L-rhamnonate (KDR) to pyruvate and lactaldehyde. This is 2-keto-3-deoxy-L-rhamnonate aldolase from Escherichia coli O157:H7.